The sequence spans 393 residues: NAD(P)H-quinone oxidoreductase subunit H, chloroplastic (393 aa).

The protein belongs to the complex I 49 kDa subunit family. In terms of assembly, NDH is composed of at least 16 different subunits, 5 of which are encoded in the nucleus.

The protein localises to the plastid. It is found in the chloroplast thylakoid membrane. The enzyme catalyses a plastoquinone + NADH + (n+1) H(+)(in) = a plastoquinol + NAD(+) + n H(+)(out). The catalysed reaction is a plastoquinone + NADPH + (n+1) H(+)(in) = a plastoquinol + NADP(+) + n H(+)(out). Its function is as follows. NDH shuttles electrons from NAD(P)H:plastoquinone, via FMN and iron-sulfur (Fe-S) centers, to quinones in the photosynthetic chain and possibly in a chloroplast respiratory chain. The immediate electron acceptor for the enzyme in this species is believed to be plastoquinone. Couples the redox reaction to proton translocation, and thus conserves the redox energy in a proton gradient. The protein is NAD(P)H-quinone oxidoreductase subunit H, chloroplastic of Nicotiana sylvestris (Wood tobacco).